A 310-amino-acid chain; its full sequence is Homoserine kinase (310 aa).

91-101 (PIGSGLGSSAC) is a binding site for ATP.

The protein belongs to the GHMP kinase family. Homoserine kinase subfamily.

It localises to the cytoplasm. It carries out the reaction L-homoserine + ATP = O-phospho-L-homoserine + ADP + H(+). It participates in amino-acid biosynthesis; L-threonine biosynthesis; L-threonine from L-aspartate: step 4/5. Functionally, catalyzes the ATP-dependent phosphorylation of L-homoserine to L-homoserine phosphate. The protein is Homoserine kinase of Escherichia coli O139:H28 (strain E24377A / ETEC).